The sequence spans 423 residues: UPF0229 protein VV1_2091 (423 aa).

Residues 81–111 form a disordered region; the sequence is QFITGDKIERPKGGQGGGGAGDGDASADGEG. Gly residues predominate over residues 93–102; it reads GGQGGGGAGD.

Belongs to the UPF0229 family.

The protein is UPF0229 protein VV1_2091 of Vibrio vulnificus (strain CMCP6).